A 485-amino-acid chain; its full sequence is Glutamate mutase epsilon subunit (485 aa).

R66 is a binding site for L-glutamate. G68 lines the adenosylcob(III)alamin pocket. R100 lines the L-glutamate pocket. N123 is a binding site for adenosylcob(III)alamin. L-glutamate contacts are provided by residues 149-150 (RH), E171, and Y177. P180 lines the adenosylcob(III)alamin pocket. Y181 contributes to the L-glutamate binding site. 4 residues coordinate adenosylcob(III)alamin: F297, K326, E330, and I334.

This sequence belongs to the methylaspartate mutase GlmE subunit family. In terms of assembly, heterotetramer composed of 2 epsilon subunits (GlmE) and 2 sigma subunits (GlmS). GlmE exists as a homodimer and GlmS as a monomer. Requires adenosylcob(III)alamin as cofactor.

It carries out the reaction (2S,3S)-3-methyl-L-aspartate = L-glutamate. Its pathway is amino-acid degradation; L-glutamate degradation via mesaconate pathway; acetate and pyruvate from L-glutamate: step 1/4. Catalyzes the carbon skeleton rearrangement of L-glutamate to L-threo-3-methylaspartate ((2S,3S)-3-methylaspartate). The sequence is that of Glutamate mutase epsilon subunit from Treponema denticola (strain ATCC 35405 / DSM 14222 / CIP 103919 / JCM 8153 / KCTC 15104).